Reading from the N-terminus, the 148-residue chain is Homoprotocatechuate degradative operon repressor (148 aa).

The 133-residue stretch at 2-134 folds into the HTH marR-type domain; that stretch reads HDSLTIALLQ…LTHLLEEFIA (133 aa).

Its function is as follows. Repressor for the homoprotocatechuate catabolic pathway hpc operon. The protein is Homoprotocatechuate degradative operon repressor (hpcR) of Escherichia coli.